Reading from the N-terminus, the 170-residue chain is ATP synthase subunit b (170 aa).

Residues 30 to 50 (FFFVLAIFLVVLAVIGTFVVP) form a helical membrane-spanning segment.

The protein belongs to the ATPase B chain family. F-type ATPases have 2 components, F(1) - the catalytic core - and F(0) - the membrane proton channel. F(1) has five subunits: alpha(3), beta(3), gamma(1), delta(1), epsilon(1). F(0) has three main subunits: a(1), b(2) and c(10-14). The alpha and beta chains form an alternating ring which encloses part of the gamma chain. F(1) is attached to F(0) by a central stalk formed by the gamma and epsilon chains, while a peripheral stalk is formed by the delta and b chains.

Its subcellular location is the cell membrane. In terms of biological role, f(1)F(0) ATP synthase produces ATP from ADP in the presence of a proton or sodium gradient. F-type ATPases consist of two structural domains, F(1) containing the extramembraneous catalytic core and F(0) containing the membrane proton channel, linked together by a central stalk and a peripheral stalk. During catalysis, ATP synthesis in the catalytic domain of F(1) is coupled via a rotary mechanism of the central stalk subunits to proton translocation. Component of the F(0) channel, it forms part of the peripheral stalk, linking F(1) to F(0). The polypeptide is ATP synthase subunit b (Mycobacterium ulcerans (strain Agy99)).